Consider the following 344-residue polypeptide: Krueppel-like factor 3 (344 aa).

Positions 1–74 (MLMFDPVPVK…TVNKRGSPPA (74 aa)) are repressor domain. K10 participates in a covalent cross-link: Glycyl lysine isopeptide (Lys-Gly) (interchain with G-Cter in SUMO). A 9aaTAD; inactive motif is present at residues 60–68 (EPVDLTVNK). The CTBP-binding motif motif lies at 61–65 (PVDLT). The tract at residues 66–111 (VNKRGSPPAAGGSPSSLKFPSHRRASPGLSMPSSSPPIKKYSPPSP) is disordered. K68 is covalently cross-linked (Glycyl lysine isopeptide (Lys-Gly) (interchain with G-Cter in SUMO2)). 2 stretches are compositionally biased toward low complexity: residues 70-81 (GSPPAAGGSPSS) and 91-107 (SPGL…KKYS). S71, S91, S100, S107, and S110 each carry phosphoserine. A Glycyl lysine isopeptide (Lys-Gly) (interchain with G-Cter in SUMO2) cross-link involves residue K195. A Glycyl lysine isopeptide (Lys-Gly) (interchain with G-Cter in SUMO); alternate cross-link involves residue K197. K197 participates in a covalent cross-link: Glycyl lysine isopeptide (Lys-Gly) (interchain with G-Cter in SUMO2); alternate. Phosphoserine occurs at positions 215, 223, and 249. Positions 235-254 (SVIVQPGKRPLPVESPDTQR) are disordered. C2H2-type zinc fingers lie at residues 259-283 (HRCD…RRTH), 289-313 (YKCT…FRKH), and 319-341 (FQCP…RKRH).

The protein belongs to the krueppel C2H2-type zinc-finger protein family. In terms of assembly, monomer. Post-translationally, sumoylated with SUMO1. Sumoylation is enhanced by PIAS1, PIAS2alpha and PIAS2beta, and PIAS4, but not by Pc2. Enhances transcriptional repression, but has no effect on DNA binding. Sumoylation on Lys-197 is the major site. In terms of tissue distribution, in 8.5 day embryos, expressed in midbrain, anterior hindbrain and ventral forebrain. In 9 day embryos, expressed throughout ventral anterior half of embryo including midbrain-hindbrain junction, ventral midbrain, diencephalon and forebrain. At 10.5 days, distribution is more widespread with expression also found in developing limb buds. Widely expressed in the adult.

It is found in the nucleus. In terms of biological role, binds to the CACCC box of erythroid cell-expressed genes. May play a role in hematopoiesis. In Mus musculus (Mouse), this protein is Krueppel-like factor 3 (Klf3).